A 445-amino-acid chain; its full sequence is uncharacterized protein (445 aa).

8 consecutive transmembrane segments (helical) span residues 16–36 (IVSLGVTASSFLFINGVAFLI), 52–72 (LLASMPSWGLVVTMFAWGYLL), 98–118 (VHSLLWIGVFLFLGGMAAGGC), 168–188 (GLMFPAVVCTLAAVASVLGIV), 219–239 (ASALLMMPQTVTVTFMLVWLI), 243–263 (GWSVAQAGVLVTISQLLGALG), 283–303 (LIAAAAAATLFLLAAVDNEGS), and 366–386 (AAYPTAWALCGVFPLAAVPLV). The segment at 417 to 445 (AWPNGPRRPGPPGQPRRVRQGGTAITPPT) is disordered.

The protein belongs to the major facilitator superfamily.

It localises to the cell membrane. This is an uncharacterized protein from Mycobacterium tuberculosis (strain ATCC 25618 / H37Rv).